Consider the following 531-residue polypeptide: MLSSITLLPLLAAVSTPAFAAVRNYKFDIKNVNVAPDGFQRPIVSVNGLVPGTLITANKGDTLRINVTNQLTDPSMRRATTIHWHGLFQATTADEDGPAFVTQCPIAQNLSYTYEIPLHGQTGTMWYHAHLASQYVDGLRGPLVIYDPNDPHKSRYDVDDASTVVMLEDWYHTPAPVLEKQMFSTNNTALLSPVPDSGLINGKGRYVGGPAVPRSVINVKRGKRYRLRVINASAIGSFTFSIEGHRLTVIEADGIPHQPLPVDSFQIYAGQRYSVIVEANQTAANYWIRAPMTVAGAGTNANLDPTNVFAVLHYEGAPNAEPTTEQGSAIGTALVEENLHALINPGAPGGSAPADVSLNLAIGRSTVDGILRFTFNNIKYEAPSLPTLLKILANNASNDADFTPNEHTIVLPHNKVIGAQHHRGADHPIHLHGHVFDIVKSLGGTPNYVNPPRRDVVRVGGTGVVLRFKADNPGPWFVHCHIDCTWRLGSHLSLPRPPARFARVSSRSSPTMPGTSSAPSTRLFLPICSKW.

An N-terminal signal peptide occupies residues 1 to 19 (MLSSITLLPLLAAVSTPAF). 3 consecutive Plastocyanin-like domains span residues 23–146 (RNYK…LVIY), 158–315 (VDDA…LHYE), and 384–507 (SLPT…VSSR). An N-linked (GlcNAc...) asparagine glycan is attached at N66. Cu cation-binding residues include H83 and H85. A disulfide bridge connects residues C104 and C528. Residue N109 is glycosylated (N-linked (GlcNAc...) asparagine). Positions 128 and 130 each coordinate Cu cation. N-linked (GlcNAc...) asparagine glycans are attached at residues N186, N231, N280, and N395. Cu cation-binding residues include H427, H430, H432, H479, C480, and H481.

This sequence belongs to the multicopper oxidase family. Homodimer. It depends on Cu cation as a cofactor. In mycelia, at a higher level than LCC1, LCC2 and LCC3.

It is found in the secreted. The catalysed reaction is 4 hydroquinone + O2 = 4 benzosemiquinone + 2 H2O. Lignin degradation and detoxification of lignin-derived products. This is Laccase-4 (LCC4) from Thanatephorus cucumeris (Black scurf of potato).